The following is a 207-amino-acid chain: Testis-expressed protein 35 (207 aa).

A coiled-coil region spans residues 43–79; that stretch reads RKGMTRELKNELREVREQLTEKMEEIKQIKDIMDKDF.

As to expression, testis-specific. Expressed during spermatogenesis.

It is found in the nucleus. The sequence is that of Testis-expressed protein 35 (Tex35) from Mus musculus (Mouse).